Here is a 320-residue protein sequence, read N- to C-terminus: Malate dehydrogenase (320 aa).

Residues 10-15 (GSGMIG) and Asp34 contribute to the NAD(+) site. Arg83 and Arg89 together coordinate substrate. Residues Asn96 and 119-121 (ITN) contribute to the NAD(+) site. 2 residues coordinate substrate: Asn121 and Arg152. His176 acts as the Proton acceptor in catalysis.

Belongs to the LDH/MDH superfamily. MDH type 3 family.

The catalysed reaction is (S)-malate + NAD(+) = oxaloacetate + NADH + H(+). In terms of biological role, catalyzes the reversible oxidation of malate to oxaloacetate. The sequence is that of Malate dehydrogenase from Rhizobium meliloti (strain 1021) (Ensifer meliloti).